Reading from the N-terminus, the 190-residue chain is Corticoliberin (190 aa).

The N-terminal stretch at 1-24 (MRLPLLVSVGVLLVALLPSPPCRA) is a signal peptide. The propeptide occupies 25 to 147 (LLSRGPIPGA…QEAPAARKRR (123 aa)). Disordered regions lie at residues 33-53 (GARQASQHPQPLSFFQPLPQP) and 115-151 (PRRPLDSPAGPAKRGTENALGSRQEAPAARKRRSQEP). Positions 41–53 (PQPLSFFQPLPQP) are enriched in low complexity. Ala-188 is modified (alanine amide).

The protein belongs to the sauvagine/corticotropin-releasing factor/urotensin I family. As to quaternary structure, interacts (via C-terminus) with CRFR1 (via N-terminal extracellular domain). As to expression, produced by the hypothalamus.

Its subcellular location is the secreted. Hormone regulating the release of corticotropin from pituitary gland. Induces NLRP6 in intestinal epithelial cells, hence may influence gut microbiota profile. This Ovis aries (Sheep) protein is Corticoliberin (CRH).